The sequence spans 433 residues: GTPase Obg (433 aa).

The 159-residue stretch at 1-159 (MKFVDSADLI…FEIRAELKVL (159 aa)) folds into the Obg domain. The OBG-type G domain occupies 160–332 (ADVGFVGLPN…LLFMIYEELK (173 aa)). GTP-binding positions include 166–173 (GLPNAGKS), 191–195 (FTTIT), 213–216 (DLPG), 284–287 (NKMD), and 313–315 (SGL). Ser173 and Thr193 together coordinate Mg(2+). The OCT domain occupies 355–433 (KFEEQKEDIQ…VFDYELEWTD (79 aa)).

It belongs to the TRAFAC class OBG-HflX-like GTPase superfamily. OBG GTPase family. In terms of assembly, monomer. Mg(2+) is required as a cofactor.

It localises to the cytoplasm. An essential GTPase which binds GTP, GDP and possibly (p)ppGpp with moderate affinity, with high nucleotide exchange rates and a fairly low GTP hydrolysis rate. Plays a role in control of the cell cycle, stress response, ribosome biogenesis and in those bacteria that undergo differentiation, in morphogenesis control. In Mycoplasma mycoides subsp. mycoides SC (strain CCUG 32753 / NCTC 10114 / PG1), this protein is GTPase Obg.